Here is a 262-residue protein sequence, read N- to C-terminus: Kallikrein-1 (262 aa).

Positions 1-18 (MWFLVLCLALSLGGTGAA) are cleaved as a signal peptide. Positions 19–24 (PPIQSR) are cleaved as a propeptide — activation peptide. One can recognise a Peptidase S1 domain in the interval 25 to 259 (IVGGWECEQH…YVKWIEDTIA (235 aa)). 5 disulfide bridges follow: C31–C174, C50–C66, C153–C220, C185–C199, and C210–C235. The Charge relay system role is filled by H65. S93 is a glycosylation site (O-linked (GalNAc...) serine). A glycan (N-linked (GlcNAc...) asparagine) is linked at N102. O-linked (GalNAc...) serine glycosylation is present at S104. N108 carries an N-linked (GlcNAc...) asparagine glycan. D120 serves as the catalytic Charge relay system. Residue N165 is glycosylated (N-linked (GlcNAc...) asparagine; partial). O-linked (GalNAc...) serine glycosylation is present at S167. S214 functions as the Charge relay system in the catalytic mechanism.

This sequence belongs to the peptidase S1 family. Kallikrein subfamily. In terms of processing, the O-linked polysaccharides on Ser-93, Ser-104 and Ser-167 are probably the mucin type linked to GalNAc. In PubMed:3163150, GalNAc was detected with the corresponding peptides but not located. Isoform 2 is expressed in pancreas, salivary glands, kidney, colon, prostate gland, testis, spleen and the colon adenocarcinoma cell line T84.

It carries out the reaction Preferential cleavage of Arg-|-Xaa bonds in small molecule substrates. Highly selective action to release kallidin (lysyl-bradykinin) from kininogen involves hydrolysis of Met-|-Xaa or Leu-|-Xaa.. Glandular kallikreins cleave Met-Lys and Arg-Ser bonds in kininogen to release Lys-bradykinin. Functionally, (Microbial infection) Cleaves Neisseria meningitidis NHBA in saliva; Neisseria is an obligate commensal of the nasopharyngeal mucosa. In Homo sapiens (Human), this protein is Kallikrein-1 (KLK1).